Reading from the N-terminus, the 160-residue chain is SsrA-binding protein (160 aa).

Residues 136–160 form a disordered region; the sequence is KRDTVRERDSNRELQRAVRNKGKED.

Belongs to the SmpB family.

It is found in the cytoplasm. Its function is as follows. Required for rescue of stalled ribosomes mediated by trans-translation. Binds to transfer-messenger RNA (tmRNA), required for stable association of tmRNA with ribosomes. tmRNA and SmpB together mimic tRNA shape, replacing the anticodon stem-loop with SmpB. tmRNA is encoded by the ssrA gene; the 2 termini fold to resemble tRNA(Ala) and it encodes a 'tag peptide', a short internal open reading frame. During trans-translation Ala-aminoacylated tmRNA acts like a tRNA, entering the A-site of stalled ribosomes, displacing the stalled mRNA. The ribosome then switches to translate the ORF on the tmRNA; the nascent peptide is terminated with the 'tag peptide' encoded by the tmRNA and targeted for degradation. The ribosome is freed to recommence translation, which seems to be the essential function of trans-translation. The polypeptide is SsrA-binding protein (Pseudomonas putida (strain W619)).